The following is a 282-amino-acid chain: 2-dehydro-3-deoxyphosphooctonate aldolase (282 aa).

The protein belongs to the KdsA family.

The protein localises to the cytoplasm. It catalyses the reaction D-arabinose 5-phosphate + phosphoenolpyruvate + H2O = 3-deoxy-alpha-D-manno-2-octulosonate-8-phosphate + phosphate. It functions in the pathway carbohydrate biosynthesis; 3-deoxy-D-manno-octulosonate biosynthesis; 3-deoxy-D-manno-octulosonate from D-ribulose 5-phosphate: step 2/3. The protein operates within bacterial outer membrane biogenesis; lipopolysaccharide biosynthesis. This Shewanella sp. (strain ANA-3) protein is 2-dehydro-3-deoxyphosphooctonate aldolase.